We begin with the raw amino-acid sequence, 417 residues long: Tryptophan synthase beta chain (417 aa).

The residue at position 110 (Lys110) is an N6-(pyridoxal phosphate)lysine.

It belongs to the TrpB family. In terms of assembly, tetramer of two alpha and two beta chains. It depends on pyridoxal 5'-phosphate as a cofactor.

The catalysed reaction is (1S,2R)-1-C-(indol-3-yl)glycerol 3-phosphate + L-serine = D-glyceraldehyde 3-phosphate + L-tryptophan + H2O. The protein operates within amino-acid biosynthesis; L-tryptophan biosynthesis; L-tryptophan from chorismate: step 5/5. In terms of biological role, the beta subunit is responsible for the synthesis of L-tryptophan from indole and L-serine. This chain is Tryptophan synthase beta chain, found in Prochlorococcus marinus (strain NATL1A).